The sequence spans 331 residues: MKSLFLLVLGNTEVSLIPGISVAGATPELTKYTPPADAEYLFYDKPKIIDAIPVTPEGHPTPAIITKAARELANFPILVVRGGTYLAPKVPHVHISSIVGRDFRREPALPEAGEIIERAKLLGQELERSGIEELVIGESTPGGTTTAQAILWALGYEGKTSSASPNNPQELKRRVIEEGFRRAGIEFGGLKGNSLEALRQFGDPMMATVVGLSLGFKGDVVLAGGTQMLAVAAILKGLGEDLSRFMIATTRWVVEDKSATFIKTAREIGIISYAADLDFSKSEFKGLRDYEKGYVKEGVGAGGATWLAVKAGFSPEDVVRKVEELYRKLIS.

This sequence belongs to the UPF0284 family.

The protein is UPF0284 protein PF0303 of Pyrococcus furiosus (strain ATCC 43587 / DSM 3638 / JCM 8422 / Vc1).